Here is a 338-residue protein sequence, read N- to C-terminus: Pyridoxal 5'-phosphate synthase subunit PdxS (338 aa).

Residue D66 participates in D-ribose 5-phosphate binding. K123 acts as the Schiff-base intermediate with D-ribose 5-phosphate in catalysis. A D-ribose 5-phosphate-binding site is contributed by G195. K207 serves as a coordination point for D-glyceraldehyde 3-phosphate. D-ribose 5-phosphate is bound by residues G256 and G277–S278.

Belongs to the PdxS/SNZ family. In terms of assembly, in the presence of PdxT, forms a dodecamer of heterodimers.

It catalyses the reaction aldehydo-D-ribose 5-phosphate + D-glyceraldehyde 3-phosphate + L-glutamine = pyridoxal 5'-phosphate + L-glutamate + phosphate + 3 H2O + H(+). It participates in cofactor biosynthesis; pyridoxal 5'-phosphate biosynthesis. Catalyzes the formation of pyridoxal 5'-phosphate from ribose 5-phosphate (RBP), glyceraldehyde 3-phosphate (G3P) and ammonia. The ammonia is provided by the PdxT subunit. Can also use ribulose 5-phosphate and dihydroxyacetone phosphate as substrates, resulting from enzyme-catalyzed isomerization of RBP and G3P, respectively. In Saccharolobus islandicus (strain Y.N.15.51 / Yellowstone #2) (Sulfolobus islandicus), this protein is Pyridoxal 5'-phosphate synthase subunit PdxS.